We begin with the raw amino-acid sequence, 3664 residues long: MVRETRHLWVGNLPENVREEKIIEHFKRYGRVESVKILPKRGSEGGVAAFVDFVDIKSAQKAHNSVNKMGDRDLRTDYNEPGTIPSAARGLDDTVSIASRSREVSGFRGGGGGPAYGPPPSLHAREGRYERRLDGASDNRERAYEHSAYGHHERGTGGFDRTRHYDQDYYRDPRERTLQHGLYYASRSRSPNRFDAHDPRYEPRAREQFTLPSVVHRDIYRDDITREVRGRRPERNYQHSRSRSPHSSQSRNQSPQRLASQASRPTRSPSGSGSRSRSSSSDSISSSSSTSSDSSDSSSSSSDDSPARSVQSAAVPAPTSQLLSSLEKDEPRKSFGIKVQNLPVRSTDTSLKDGLFHEFKKFGKVTSVQIHGTSEERYGLVFFRQQEDQEKALTASKGKLFFGMQIEVTAWIGPETESENEFRPLDERIDEFHPKATRTLFIGNLEKTTTYHDLRNIFQRFGEIVDIDIKKVNGVPQYAFLQYCDIASVCKAIKKMDGEYLGNNRLKLGFGKSMPTNCVWLDGLSSNVSDQYLTRHFCRYGPVVKVVFDRLKGMALVLYNEIEYAQAAVKETKGRKIGGNKIKVDFANRESQLAFYHCMEKSGQDIRDFYEMLAERREERRASYDYNQDRTYYESVRTPGTYPEDSRRDYPARGREFYSEWETYQGDYYESRYYDDPREYRDYRNDPYEQDIREYSYRQRERERERERFESDRDRDHERRPIERSQSPVHLRRPQSPGASPSQAERLPSDSERRLYSRSSDRSGSCSSLSPPRYEKLDKSRLERYTKNEKTDKERTFDPERVERERRLIRKEKVEKDKTDKQKRKGKVHSPSSQSSETDQENEREQSPEKPRSCNKLSREKADKEGIAKNRLELMPCVVLTRVKEKEGKVIDHTPVEKLKAKLDNDTVKSSALDQKLQVSQTEPAKSDLSKLESVRMKVPKEKGLSSHVEVVEKEGRLKARKHLKPEQPADGVSAVDLEKLEARKRRFADSNLKAEKQKPEVKKSSPEMEDARVLSKKQPDVSSREVILLREGEAERKPVRKEILKRESKKIKLDRLNTVASPKDCQELASISVGSGSRPSSDLQARLGELAGESVENQEVQSKKPIPSKPQLKQLQVLDDQGPEREDVRKNYCSLRDETPERKSGQEKSHSVNTEEKIGIDIDHTQSYRKQMEQSRRKQQMEMEIAKSEKFGSPKKDVDEYERRSLVHEVGKPPQDVTDDSPPSKKKRMDHVDFDICTKRERNYRSSRQISEDSERTGGSPSVRHGSFHEDEDPIGSPRLLSVKGSPKVDEKVLPYSNITVREESLKFNPYDSSRREQMADMAKIKLSVLNSEDELNRWDSQMKQDAGRFDVSFPNSIIKRDSLRKRSVRDLEPGEVPSDSDEDGEHKSHSPRASALYESSRLSFLLRDREDKLRERDERLSSSLERNKFYSFALDKTITPDTKALLERAKSLSSSREENWSFLDWDSRFANFRNNKDKEKVDSAPRPIPSWYMKKKKIRTDSEGKMDDKKEDHKEEEQERQELFASRFLHSSIFEQDSKRLQHLERKEEDSDFISGRIYGKQTSEGANSTTDSIQEPVVLFHSRFMELTRMQQKEKEKDQKPKEVEKQEDTENHPKTPESAPENKDSELKTPPSVGPPSVTVVTLESAPSALEKTTGDKTVEAPLVTEEKTVEPATVSEEAKPASEPAPAPVEQLEQVDLPPGADPDKEAAMMPAGVEEGSSGDQPPYLDAKPPTPGASFSQAESNVDPEPDSTQPLSKPAQKSEEANEPKAEKPDATADAEPDANQKAEAAPESQPPASEDLEVDPPVAAKDKKPNKSKRSKTPVQAAAVSIVEKPVTRKSERIDREKLKRSNSPRGEAQKLLELKMEAEKITRTASKNSAADLEHPEPSLPLSRTRRRNVRSVYATMGDHENRSPVKEPVEQPRVTRKRLERELQEAAAVPTTPRRGRPPKTRRRADEEEENEAKEPAETLKPPEGWRSPRSQKTAAGGGPQGKKGKNEPKVDATRPEATTEVGPQIGVKESSMEPKAAEEEAGSEQKRDRKDAGTDKNPPETAPVEVVEKKPAPEKNSKSKRGRSRNSRLAVDKSASLKNVDAAVSPRGAAAQAGERESGVVAVSPEKSESPQKEDGLSSQLKSDPVDPDKEPEKEDVSASGPSPEATQLAKQMELEQAVEHIAKLAEASASAAYKADAPEGLAPEDRDKPAHQASETELAAAIGSIINDISGEPENFPAPPPYPGESQTDLQPPAGAQALQPSEEGMETDEAVSGILETEAATESSRPPVNAPDPSAGPTDTKEARGNSSETSHSVPEAKGSKEVEVTLVRKDKGRQKTTRSRRKRNTNKKVVAPVESHVPESNQAQGESPAANEGTTVQHPEAPQEEKQSEKPHSTPPQSCTSDLSKIPSTENSSQEISVEERTPTKASVPPDLPPPPQPAPVDEEPQARFRVHSIIESDPVTPPSDPSIPIPTLPSVTAAKLSPPVASGGIPHQSPPTKVTEWITRQEEPRAQSTPSPALPPDTKASDVDTSSSTLRKILMDPKYVSATSVTSTSVTTAIAEPVSAAPCLHEAPPPPVDSKKPLEEKTAPPVTNNSEIQASEVLVAADKEKVAPVIAPKITSVISRMPVSIDLENSQKITLAKPAPQTLTGLVSALTGLVNVSLVPVNALKGPVKGSVTTLKSLVSTPAGPVNVLKGPVNVLTGPVNVLTTPVNATVGTVNAAPGTVNAAASAVNATASAVTVTAGAVTAASGGVTATTGTVTMAGAVIAPSTKCKQRASANENSRFHPGSMPVIDDRPADAGSGAGLRVNTSEGVVLLSYSGQKTEGPQRISAKISQIPPASAMDIEFQQSVSKSQVKPDSVTASQPPSKGPQAPAGYANVATHSTLVLTAQTYNASPVISSVKADRPSLEKPEPIHLSVSTPVTQGGTVKVLTQGINTPPVLVHNQLVLTPSIVTTNKKLADPVTLKIETKVLQPANLGSTLTPHHPPALPSKLPTEVNHVPSGPSIPADRTVSHLAAAKLDAHSPRPSGPGPSSFPRASHPSSTASTALSTNATVMLAAGIPVPQFISSIHPEQSVIMPPHSITQTVSLSHLSQGEVRMNTPTLPSITYSIRPEALHSPRAPLQPQQIEVRAPQRASTPQPAPAGVPALASQHPPEEEVHYHLPVARATAPVQSEVLVMQSEYRLHPYTVPRDVRIMVHPHVTAVSEQPRAADGVVKVPPASKAPQQPGKEAAKTPDAKAAPTPTPAPVPVPVPLPAPAPAPHGEARILTVTPSNQLQGLPLTPPVVVTHGVQIVHSSGELFQEYRYGDIRTYHPPAQLTHTQFPAASSVGLPSRTKTAAQGPPPEGEPLQPPQPVQSTQPAQPAPPCPPSQLGQPGQPPSSKMPQVSQEAKGTQTGVEQPRLPAGPANRPPEPHTQVQRAQAETGPTSFPSPVSVSMKPDLPVSLPTQTAPKQPLFVPTTSGPSTPPGLVLPHTEFQPAPKQDSSPHLTSQRPVDMVQLLKKYPIVWQGLLALKNDTAAVQLHFVSGNNVLAHRSLPLSEGGPPLRIAQRMRLEATQLEGVARRMTVETDYCLLLALPCGRDQEDVVSQTESLKAAFITYLQAKQAAGIINVPNPGSNQPAYVLQIFPPCEFSESHLSRLAPDLLASISNISPHLMIVIASV.

The DNA-binding element occupies 1 to 573; the sequence is MVRETRHLWV…YAQAAVKETK (573 aa). One can recognise an RRM 1 domain in the interval 6–81; that stretch reads RHLWVGNLPE…RDLRTDYNEP (76 aa). Residues 70–89 are disordered; that stretch reads GDRDLRTDYNEPGTIPSAAR. Ser-99 carries the phosphoserine modification. Disordered regions lie at residues 103-164, 183-209, and 225-330; these read EVSG…RTRH, YYAS…REQF, and TREV…EKDE. Arg-108 is subject to Omega-N-methylarginine. Residues 123–164 show a composition bias toward basic and acidic residues; sequence HAREGRYERRLDGASDNRERAYEHSAYGHHERGTGGFDRTRH. A phosphoserine mark is found at Ser-188 and Ser-190. Composition is skewed to basic and acidic residues over residues 192 to 207 and 225 to 237; these read NRFD…RARE and TREV…ERNY. Residues 245-309 show a composition bias toward low complexity; it reads PHSSQSRNQS…SSSDDSPARS (65 aa). Residue Ser-309 is modified to Phosphoserine. RRM domains lie at 335–415, 438–513, and 517–589; these read FGIK…IGPE, RTLF…FGKS, and NCVW…FANR. Ser-623 carries the phosphoserine modification. Positions 678–723 are enriched in basic and acidic residues; it reads REYRDYRNDPYEQDIREYSYRQRERERERERFESDRDRDHERRPIE. Disordered regions lie at residues 678–871, 918–941, and 957–1020; these read REYR…AKNR, QVSQ…KVPK, and RLKA…KKQP. Positions 688–715 form a coiled coil; it reads YEQDIREYSYRQRERERERERFESDRDR. 4 positions are modified to phosphoserine: Ser-725, Ser-727, Ser-736, and Ser-740. Residues 747–761 are compositionally biased toward basic and acidic residues; the sequence is LPSDSERRLYSRSSD. The span at 762–772 shows a compositional bias: low complexity; it reads RSGSCSSLSPP. Ser-770 bears the Phosphoserine mark. Basic and acidic residues predominate over residues 773 to 820; sequence RYEKLDKSRLERYTKNEKTDKERTFDPERVERERRLIRKEKVEKDKTD. A phosphoserine mark is found at Ser-830, Ser-833, and Ser-847. Basic and acidic residues-rich tracts occupy residues 841 to 871, 925 to 941, and 993 to 1020; these read ENER…AKNR, AKSD…KVPK, and LKAE…KKQP. Positions 977-1004 form a coiled coil; it reads DLEKLEARKRRFADSNLKAEKQKPEVKK. Ser-1062 carries the post-translational modification Phosphoserine. Positions 1070–1287 are disordered; it reads ASISVGSGSR…SPRLLSVKGS (218 aa). A compositionally biased stretch (low complexity) spans 1071–1082; the sequence is SISVGSGSRPSS. Residues 1123–1212 are compositionally biased toward basic and acidic residues; it reads GPEREDVRKN…ERRSLVHEVG (90 aa). Thr-1140 carries the phosphothreonine modification. Ser-1168 is modified (phosphoserine). Residues 1170-1191 are a coiled coil; it reads RKQMEQSRRKQQMEMEIAKSEK. A phosphoserine mark is found at Ser-1194, Ser-1222, Ser-1252, Ser-1261, Ser-1268, Ser-1278, Ser-1283, Ser-1287, Ser-1333, Ser-1380, and Ser-1382. Residues 1231–1257 show a composition bias toward basic and acidic residues; sequence DHVDFDICTKRERNYRSSRQISEDSER. The tract at residues 1366–1397 is disordered; that stretch reads RKRSVRDLEPGEVPSDSDEDGEHKSHSPRASA. A coiled-coil region spans residues 1408-1428; the sequence is LRDREDKLRERDERLSSSLER. Phosphothreonine is present on residues Thr-1439 and Thr-1441. 2 coiled-coil regions span residues 1496 to 1529 and 1592 to 1612; these read KKKK…FASR and RMQQ…KQED. Disordered stretches follow at residues 1497 to 1524, 1588 to 2171, 2185 to 2532, 2566 to 2590, 2775 to 2806, and 2847 to 2875; these read KKKI…ERQE, MELT…QMEL, SASA…TSSS, PCLH…APPV, QRAS…GAGL, and FQQS…QAPA. Composition is skewed to basic and acidic residues over residues 1501 to 1524 and 1588 to 1631; these read RTDS…ERQE and MELT…DSEL. Phosphothreonine is present on residues Thr-1619 and Thr-1633. Over residues 1633 to 1646 the composition is skewed to low complexity; it reads TPPSVGPPSVTVVT. Residues 1657-1674 show a composition bias toward basic and acidic residues; sequence TTGDKTVEAPLVTEEKTV. Residues 1686–1695 are compositionally biased toward low complexity; that stretch reads ASEPAPAPVE. A compositionally biased stretch (basic and acidic residues) spans 1764-1779; that stretch reads QKSEEANEPKAEKPDA. Positions 1791–1802 are enriched in low complexity; the sequence is AEAAPESQPPAS. Thr-1826 carries the phosphothreonine modification. Composition is skewed to basic and acidic residues over residues 1839 to 1853 and 1861 to 1876; these read PVTR…EKLK and EAQK…EKIT. Residues Ser-1897 and Ser-1918 each carry the phosphoserine modification. Positions 1912–1925 are enriched in basic and acidic residues; it reads GDHENRSPVKEPVE. Positions 1928–1944 form a coiled coil; it reads RVTRKRLERELQEAAAV. Thr-1947 bears the Phosphothreonine mark. Positions 1949–1958 are enriched in basic residues; sequence RRGRPPKTRR. Composition is skewed to basic and acidic residues over residues 2000–2010, 2026–2054, and 2062–2073; these read GKNEPKVDATR, SSME…DKNP, and VVEKKPAPEKNS. A phosphoserine mark is found at Ser-2101, Ser-2120, and Ser-2126. Basic and acidic residues-rich tracts occupy residues 2122-2132 and 2140-2153; these read EKSESPQKEDG and DPVD…KEDV. The interaction with MSX2 stretch occupies residues 2130 to 2464; it reads EDGLSSQLKS…ESDPVTPPSD (335 aa). Position 2159 is a phosphoserine (Ser-2159). Residue Thr-2163 is modified to Phosphothreonine. The RID domain maps to 2201–2707; the sequence is EDRDKPAHQA…NVLTGPVNVL (507 aa). The span at 2316–2328 shows a compositional bias: basic and acidic residues; sequence KGSKEVEVTLVRK. Residues 2329 to 2345 are compositionally biased toward basic residues; it reads DKGRQKTTRSRRKRNTN. Residue Ser-2366 is modified to Phosphoserine. Residues 2380–2391 are compositionally biased toward basic and acidic residues; the sequence is APQEEKQSEKPH. Thr-2393 carries the post-translational modification Phosphothreonine. Positions 2394–2415 are enriched in polar residues; the sequence is PPQSCTSDLSKIPSTENSSQEI. Residue Thr-2421 is modified to Phosphothreonine. The segment covering 2429–2438 has biased composition (pro residues); it reads PDLPPPPQPA. 2 positions are modified to phosphoserine: Ser-2452 and Ser-2456. Over residues 2459 to 2471 the composition is skewed to pro residues; that stretch reads VTPPSDPSIPIPT. The residue at position 2460 (Thr-2460) is a Phosphothreonine. Ser-2481, Ser-2486, and Ser-2493 each carry phosphoserine. Positions 2577–2586 are enriched in basic and acidic residues; the sequence is DSKKPLEEKT. Residues 2709–2870 are interaction with RBPSUH; the sequence is TPVNATVGTV…VTASQPPSKG (162 aa). The segment covering 2847 to 2867 has biased composition (polar residues); the sequence is FQQSVSKSQVKPDSVTASQPP. Phosphothreonine is present on residues Thr-2938 and Thr-2950. Disordered stretches follow at residues 2978 to 3010 and 3022 to 3047; these read LGST…IPAD and DAHS…STAS. Residues 3032-3047 show a composition bias toward low complexity; that stretch reads GPSSFPRASHPSSTAS. An asymmetric dimethylarginine mark is found at Arg-3113 and Arg-3121. 3 disordered regions span residues 3135 to 3156, 3208 to 3265, and 3327 to 3492; these read QRAS…QHPP, EQPR…APHG, and AASS…HLTS. 2 stretches are compositionally biased toward pro residues: residues 3244 to 3262 and 3343 to 3356; these read TPTP…PAPA and GPPP…PPQP. Polar residues-rich tracts occupy residues 3384 to 3399 and 3417 to 3436; these read KMPQ…QTGV and TQVQ…SPVS. Ser-3433 carries the post-translational modification Phosphoserine. The region spanning 3498 to 3664 is the SPOC domain; the sequence is MVQLLKKYPI…PHLMIVIASV (167 aa).

It belongs to the RRM Spen family. As to quaternary structure, interacts with MSX2 and HIPK3. Interacts with NCOR2, HDAC1, HDAC2, RBBP4, MBD3 and MTA1L1. Interacts with RBPSUH; this interaction may prevent the interaction between RBPSUH and NOTCH1. Interacts with the nuclear receptors RAR and PPARD. Interacts with RAR in absence of ligand. Binds to the steroid receptor RNA coactivator SRA. (Microbial infection) Interacts with Epstein-Barr virus BSFL2/BMLF1. Expressed at high level in brain, testis, spleen and thymus. Expressed at intermediate level in kidney, liver, mammary gland and skin.

It is found in the nucleus. Its function is as follows. May serve as a nuclear matrix platform that organizes and integrates transcriptional responses. In osteoblasts, supports transcription activation: synergizes with RUNX2 to enhance FGFR2-mediated activation of the osteocalcin FGF-responsive element (OCFRE). Has also been shown to be an essential corepressor protein, which probably regulates different key pathways such as the Notch pathway. Negative regulator of the Notch pathway via its interaction with RBPSUH, which prevents the association between NOTCH1 and RBPSUH, and therefore suppresses the transactivation activity of Notch signaling. Blocks the differentiation of precursor B-cells into marginal zone B-cells. Probably represses transcription via the recruitment of large complexes containing histone deacetylase proteins. May bind both to DNA and RNA. The protein is Msx2-interacting protein (SPEN) of Homo sapiens (Human).